A 352-amino-acid chain; its full sequence is GTPase Obg (352 aa).

Residues methionine 1–leucine 159 form the Obg domain. The OBG-type G domain occupies alanine 160–glutamate 330. GTP contacts are provided by residues glycine 166–serine 173, phenylalanine 191–valine 195, aspartate 213–glycine 216, asparagine 280–aspartate 283, and serine 311–valine 313. Serine 173 and threonine 193 together coordinate Mg(2+).

Belongs to the TRAFAC class OBG-HflX-like GTPase superfamily. OBG GTPase family. Monomer. Requires Mg(2+) as cofactor.

It localises to the cytoplasm. An essential GTPase which binds GTP, GDP and possibly (p)ppGpp with moderate affinity, with high nucleotide exchange rates and a fairly low GTP hydrolysis rate. Plays a role in control of the cell cycle, stress response, ribosome biogenesis and in those bacteria that undergo differentiation, in morphogenesis control. This chain is GTPase Obg, found in Trichodesmium erythraeum (strain IMS101).